The following is a 432-amino-acid chain: G-protein coupled receptor 22 (432 aa).

The Extracellular portion of the chain corresponds to 1–45 (MCFSPVLEINMQSESNVTVRDDIDDIDTNMYQPLSYPLSFQVSLT). N-linked (GlcNAc...) asparagine glycosylation occurs at Asn16. Residues 46-66 (GFLMLEIVLGLGSNLTVLVLY) form a helical membrane-spanning segment. Topologically, residues 67–85 (CMKSNLINSVSNIITMNLH) are cytoplasmic. The chain crosses the membrane as a helical span at residues 86-106 (VLDVIICVGCIPLTIVILLLS). At 107–115 (LESNTALIC) the chain is on the extracellular side. The helical transmembrane segment at 116–136 (CFHEACVSFASVSTAINVFAI) threads the bilayer. At 137–156 (TLDRYDISVKPANRILTMGR) the chain is on the cytoplasmic side. A helical membrane pass occupies residues 157-177 (AVMLMTSIWIFSFFSFLIPFI). Topologically, residues 178-208 (EVNFFSLQSGNTWANKTLLCVSTSEYYTELG) are extracellular. Asn192 carries an N-linked (GlcNAc...) asparagine glycan. The chain crosses the membrane as a helical span at residues 209–229 (MYYHLLVQIPIFFFTVIVMLI). Residues 230-314 (TYTKILQALN…ERQKRVFKMS (85 aa)) are Cytoplasmic-facing. Residues 315 to 335 (LLIISTFLLCWTPISVLNTTI) form a helical membrane-spanning segment. At 336–348 (LCLGPSDLLVKLR) the chain is on the extracellular side. A helical membrane pass occupies residues 349 to 369 (LCFLVMAYGTTIFHPLLYAFT). Residues 370–432 (RQKFQKVLKS…KCLVPQVVTD (63 aa)) lie on the Cytoplasmic side of the membrane.

This sequence belongs to the G-protein coupled receptor 1 family. In terms of tissue distribution, abundant levels detected in the brain and heart and no detectable expression in other peripheral tissues.

The protein resides in the cell membrane. Its function is as follows. Orphan G-protein coupled receptor. Seems to act through a G(i)/G(o) mediated pathway. May be involved in ciliogenesis. The chain is G-protein coupled receptor 22 (Gpr22) from Mus musculus (Mouse).